The following is a 456-amino-acid chain: Protein trichome birefringence-like 25 (456 aa).

The helical; Signal-anchor for type II membrane protein transmembrane segment at 26–42 threads the bilayer; sequence QIFLKSVAFFLLIGLAY. The GDS motif signature appears at 172-174; that stretch reads GDS. The DCXHWCLPGXXDXWN motif signature appears at 426 to 440; it reads DCLHWCLPGPIDSWN.

This sequence belongs to the PC-esterase family. TBL subfamily.

The protein localises to the membrane. Its function is as follows. May be involved in the O-acetylation of mannan. May act as a bridging protein that binds pectin and other cell wall polysaccharides. Probably involved in maintaining esterification of pectins. This chain is Protein trichome birefringence-like 25 (TBL25), found in Arabidopsis thaliana (Mouse-ear cress).